An 884-amino-acid polypeptide reads, in one-letter code: Probable leucine--tRNA ligase, cytoplasmic (884 aa).

The 'HIGH' region motif lies at 40–50 (PYMNGKLHLGH). Residues 566-570 (KMSKS) carry the 'KMSKS' region motif. Lys569 serves as a coordination point for ATP.

It belongs to the class-I aminoacyl-tRNA synthetase family.

The protein resides in the cytoplasm. It catalyses the reaction tRNA(Leu) + L-leucine + ATP = L-leucyl-tRNA(Leu) + AMP + diphosphate. In Vairimorpha ceranae (strain BRL01) (Microsporidian parasite), this protein is Probable leucine--tRNA ligase, cytoplasmic.